The following is a 338-amino-acid chain: Phosphate acyltransferase (338 aa).

This sequence belongs to the PlsX family. In terms of assembly, homodimer. Probably interacts with PlsY.

It localises to the cytoplasm. The catalysed reaction is a fatty acyl-[ACP] + phosphate = an acyl phosphate + holo-[ACP]. It functions in the pathway lipid metabolism; phospholipid metabolism. Catalyzes the reversible formation of acyl-phosphate (acyl-PO(4)) from acyl-[acyl-carrier-protein] (acyl-ACP). This enzyme utilizes acyl-ACP as fatty acyl donor, but not acyl-CoA. The sequence is that of Phosphate acyltransferase from Salinibacter ruber (strain DSM 13855 / M31).